The following is a 113-amino-acid chain: UPF0102 protein Mfla_2283 (113 aa).

The protein belongs to the UPF0102 family.

The polypeptide is UPF0102 protein Mfla_2283 (Methylobacillus flagellatus (strain ATCC 51484 / DSM 6875 / VKM B-1610 / KT)).